Consider the following 114-residue polypeptide: uncharacterized protein (114 aa).

It to M.jannaschii MJ0310 and MJ0714.

This is an uncharacterized protein from Methanocaldococcus jannaschii (strain ATCC 43067 / DSM 2661 / JAL-1 / JCM 10045 / NBRC 100440) (Methanococcus jannaschii).